A 257-amino-acid polypeptide reads, in one-letter code: 3-deoxy-manno-octulosonate cytidylyltransferase (257 aa).

It belongs to the KdsB family.

The protein resides in the cytoplasm. It catalyses the reaction 3-deoxy-alpha-D-manno-oct-2-ulosonate + CTP = CMP-3-deoxy-beta-D-manno-octulosonate + diphosphate. It participates in nucleotide-sugar biosynthesis; CMP-3-deoxy-D-manno-octulosonate biosynthesis; CMP-3-deoxy-D-manno-octulosonate from 3-deoxy-D-manno-octulosonate and CTP: step 1/1. It functions in the pathway bacterial outer membrane biogenesis; lipopolysaccharide biosynthesis. In terms of biological role, activates KDO (a required 8-carbon sugar) for incorporation into bacterial lipopolysaccharide in Gram-negative bacteria. The chain is 3-deoxy-manno-octulosonate cytidylyltransferase from Xylella fastidiosa (strain M23).